The sequence spans 89 residues: uncharacterized protein (89 aa).

This is an uncharacterized protein from Borreliella burgdorferi (strain ATCC 35210 / DSM 4680 / CIP 102532 / B31) (Borrelia burgdorferi).